Reading from the N-terminus, the 276-residue chain is Bis(5'-nucleosyl)-tetraphosphatase, symmetrical (276 aa).

The protein belongs to the Ap4A hydrolase family.

The enzyme catalyses P(1),P(4)-bis(5'-adenosyl) tetraphosphate + H2O = 2 ADP + 2 H(+). Its function is as follows. Hydrolyzes diadenosine 5',5'''-P1,P4-tetraphosphate to yield ADP. This chain is Bis(5'-nucleosyl)-tetraphosphatase, symmetrical, found in Psychromonas ingrahamii (strain DSM 17664 / CCUG 51855 / 37).